The primary structure comprises 120 residues: Flagellar protein FliT (120 aa).

The required for homodimerization stretch occupies residues 1–50; it reads MENLSPLLIEYQGLLKLIRNIKAMALNGLWDDVVEQEIVYIQSIERISQI. The interval 60-98 is fliD binding; the sequence is VQLQFRQLLQDILDTESQVKELLQNRMQELAVLIQQSQN.

The protein belongs to the FliT family. In terms of assembly, homodimer. Interacts with FliD and FlhC.

It localises to the cytoplasm. Its subcellular location is the cytosol. Its function is as follows. Dual-function protein that regulates the transcription of class 2 flagellar operons and that also acts as an export chaperone for the filament-capping protein FliD. As a transcriptional regulator, acts as an anti-FlhDC factor; it directly binds FlhC, thus inhibiting the binding of the FlhC/FlhD complex to class 2 promoters, resulting in decreased expression of class 2 flagellar operons. As a chaperone, effects FliD transition to the membrane by preventing its premature polymerization, and by directing it to the export apparatus. The chain is Flagellar protein FliT from Dickeya chrysanthemi (Pectobacterium chrysanthemi).